Here is a 756-residue protein sequence, read N- to C-terminus: Catalase-peroxidase (756 aa).

An N-terminal signal peptide occupies residues 1-26 (MKGKTVNKQTLAALVSALLVFNPAVA). The tryptophyl-tyrosyl-methioninium (Trp-Tyr) (with M-274) cross-link spans 126–248 (WHSAGTYRTL…LGATHMGLIY (123 aa)). Histidine 127 (proton acceptor) is an active-site residue. Residues 248 to 274 (YVNPEGPKGVPDPLGSAKNIRTAFSRM) constitute a cross-link (tryptophyl-tyrosyl-methioninium (Tyr-Met) (with W-126)). A heme b-binding site is contributed by histidine 289.

This sequence belongs to the peroxidase family. Peroxidase/catalase subfamily. Homodimer or homotetramer. It depends on heme b as a cofactor. Formation of the three residue Trp-Tyr-Met cross-link is important for the catalase, but not the peroxidase activity of the enzyme.

The catalysed reaction is H2O2 + AH2 = A + 2 H2O. It carries out the reaction 2 H2O2 = O2 + 2 H2O. Functionally, bifunctional enzyme with both catalase and broad-spectrum peroxidase activity. In Shewanella loihica (strain ATCC BAA-1088 / PV-4), this protein is Catalase-peroxidase.